The following is a 99-amino-acid chain: Ferredoxin, vegetative (99 aa).

Residues Y4–P96 enclose the 2Fe-2S ferredoxin-type domain. [2Fe-2S] cluster is bound by residues C42, C47, C50, and C80.

Belongs to the 2Fe2S plant-type ferredoxin family. [2Fe-2S] cluster is required as a cofactor.

In terms of biological role, ferredoxins are iron-sulfur proteins that transfer electrons in a wide variety of metabolic reactions. Donates electrons to the nitrogenase 2. This chain is Ferredoxin, vegetative (fdxH2), found in Trichormus variabilis (strain ATCC 29413 / PCC 7937) (Anabaena variabilis).